The following is a 369-amino-acid chain: Serine/threonine-protein kinase srb10 (369 aa).

The Protein kinase domain maps to 5 to 319; the sequence is YKIIGFISSG…AKQALEHVFF (315 aa). Residues 11 to 19 and lysine 36 each bind ATP; that span reads ISSGTYGKV. The active-site Proton acceptor is aspartate 140.

Belongs to the protein kinase superfamily. CMGC Ser/Thr protein kinase family. CDC2/CDKX subfamily. Component of the Cdk8 module of the Mediator complex. The Cdk8 module is composed of srb8, srb9, srb10 and srb11. Interacts with med17 and med18.

The protein resides in the nucleus. The enzyme catalyses L-seryl-[protein] + ATP = O-phospho-L-seryl-[protein] + ADP + H(+). The catalysed reaction is L-threonyl-[protein] + ATP = O-phospho-L-threonyl-[protein] + ADP + H(+). It catalyses the reaction [DNA-directed RNA polymerase] + ATP = phospho-[DNA-directed RNA polymerase] + ADP + H(+). Its function is as follows. Catalytic component of the Cdk8 module/Srb8-11 module which is a regulatory module of the Mediator complex that regulates basal RNA polymerase II transcription. The Cdk8 module may sterically hinder the interaction between Mediator and RNA polymerase II leading to transcriptional repression of a subset of genes regulated by Mediator. In Schizosaccharomyces pombe (strain 972 / ATCC 24843) (Fission yeast), this protein is Serine/threonine-protein kinase srb10 (srb10).